Here is a 560-residue protein sequence, read N- to C-terminus: Dimethylaniline monooxygenase [N-oxide-forming] 4 (560 aa).

Residues 9 to 13, E32, and 40 to 41 each bind FAD; these read GAGVS and LW. NADP(+) is bound by residues 60–61 and 195–198; these read TN and TGGD. The chain crosses the membrane as a helical span at residues 519-539; that stretch reads APVLIVSLLLIYKSSLFLELV.

The protein belongs to the FMO family. It depends on FAD as a cofactor. As to expression, detected in liver and kidney (at protein level).

It localises to the microsome membrane. It is found in the endoplasmic reticulum membrane. It carries out the reaction N,N-dimethylaniline + NADPH + O2 + H(+) = N,N-dimethylaniline N-oxide + NADP(+) + H2O. In terms of biological role, this protein is involved in the oxidative metabolism of a variety of xenobiotics such as drugs and pesticides. In Rattus norvegicus (Rat), this protein is Dimethylaniline monooxygenase [N-oxide-forming] 4 (Fmo4).